Here is a 480-residue protein sequence, read N- to C-terminus: Initiation-specific alpha-1,6-mannosyltransferase (480 aa).

Residues 1-15 (MSRKLSHLIATRKSK) are Cytoplasmic-facing. A helical; Signal-anchor for type II membrane protein membrane pass occupies residues 16–30 (TIVVTVLLIYSLLTF). At 31-480 (HLSNKRLLSQ…EDADKNAGHK (450 aa)) the chain is on the lumenal side. Positions 187 to 189 (DMD) match the DXD motif motif. 4 N-linked (GlcNAc...) asparagine glycosylation sites follow: Asn203, Asn281, Asn341, and Asn393.

Belongs to the glycosyltransferase 32 family. Mn(2+) serves as cofactor. Post-translationally, glycosylated.

It localises to the endoplasmic reticulum membrane. The protein localises to the golgi apparatus membrane. The catalysed reaction is Transfers an alpha-D-mannosyl residue from GDP-mannose into lipid-linked oligosaccharide, forming an alpha-(1-&gt;6)-D-mannosyl-D-mannose linkage.. Its function is as follows. Mannosyltransferase involved in outer chain elongation of asparagine-linked oligosaccharides of the type Man(9)GlcNAc(2). Adds the first alpha-1,6-mannose to the Man(8)GlcNAc(2) and Man(9)GlcNAc(2), but not Man(5)GlcNAc(2), endoplasmic reticulum intermediates. Represents the first enzymatic event required for synthesis of outer chain mannose linkages on yeast secretory proteins. Also has the potential to transfer a second alpha-1,6-mannose to the Man(8)GlcNAc(2) core oligosaccharide. This Saccharomyces cerevisiae (strain ATCC 204508 / S288c) (Baker's yeast) protein is Initiation-specific alpha-1,6-mannosyltransferase.